We begin with the raw amino-acid sequence, 339 residues long: MLRVAINGFGRIGRSVLRALYESDKRDKIEVVAVNELSQPEAMAHLFQYDSTHGRFQHKVTHDQEYPYSDVPDSSQDKVRILHQADLSLLPWQSLEVDLVLDCTGVYGSKSDGEKHITAGAKKVLFSHPGGSDLDNTIIYGVNHDTLLPEHRIVSNGSCTTNCIIPVIKAIDDAFGIDSGTITTIHSSMNDQQVIDAYHSDLRRTRAASQSIIPVDTKLHKGIERIFPKFSNKFEAISVRVPTVNVTAMDLSVTINTNVKVNDINQTIVNASRCTLHNIVDYTEAPLVSIDFNHDPHSAIVDGSQTRVSNGHLVKMLVWCDNEWGFANRMLDTALAMSK.

11 to 12 (RI) serves as a coordination point for NAD(+). Substrate-binding positions include 158–160 (SCT), arginine 204, 217–218 (TK), and arginine 240. Cysteine 159 serves as the catalytic Nucleophile. Asparagine 322 lines the NAD(+) pocket.

It belongs to the glyceraldehyde-3-phosphate dehydrogenase family. Epd subfamily. As to quaternary structure, homotetramer.

Its subcellular location is the cytoplasm. The catalysed reaction is D-erythrose 4-phosphate + NAD(+) + H2O = 4-phospho-D-erythronate + NADH + 2 H(+). The protein operates within cofactor biosynthesis; pyridoxine 5'-phosphate biosynthesis; pyridoxine 5'-phosphate from D-erythrose 4-phosphate: step 1/5. Functionally, catalyzes the NAD-dependent conversion of D-erythrose 4-phosphate to 4-phosphoerythronate. This Aliivibrio fischeri (strain ATCC 700601 / ES114) (Vibrio fischeri) protein is D-erythrose-4-phosphate dehydrogenase.